A 479-amino-acid chain; its full sequence is Leucine-rich repeat-containing protein 74A (479 aa).

The span at 1–10 (MDDDDIEPLE) shows a compositional bias: acidic residues. Residues 1-29 (MDDDDIEPLEYETKDETEAALAPQSSEDT) are disordered. 8 LRR repeats span residues 119-140 (TVLKLELEDNSIQEEGILSLME), 147-167 (YLQELNVSDNNLGLEGARIIS), 176-197 (SLWKLKLSGNKFKEECALLLCQ), 204-225 (RIRSLNLSHNEFSDTAGEYLGQ), 232-253 (GLQSLNLSWNHFNVRGAVALCN), 260-281 (TLKKLDVSMNGFGNDGALALGD), 288-309 (CLVYVDVSRNGITNEGASRISK), and 316-336 (CLQVLKLFLNPVSLEGAYSLI).

The polypeptide is Leucine-rich repeat-containing protein 74A (Rattus norvegicus (Rat)).